A 417-amino-acid chain; its full sequence is UDP-N-acetylglucosamine 1-carboxyvinyltransferase 3 (417 aa).

22-23 (KN) is a phosphoenolpyruvate binding site. UDP-N-acetyl-alpha-D-glucosamine is bound at residue Arg-92. Catalysis depends on Cys-116, which acts as the Proton donor. Residue Cys-116 is modified to 2-(S-cysteinyl)pyruvic acid O-phosphothioketal. Residues 121 to 125 (RPIDQ), Asp-304, and Ile-326 contribute to the UDP-N-acetyl-alpha-D-glucosamine site.

Belongs to the EPSP synthase family. MurA subfamily.

It is found in the cytoplasm. It catalyses the reaction phosphoenolpyruvate + UDP-N-acetyl-alpha-D-glucosamine = UDP-N-acetyl-3-O-(1-carboxyvinyl)-alpha-D-glucosamine + phosphate. The protein operates within cell wall biogenesis; peptidoglycan biosynthesis. In terms of biological role, cell wall formation. Adds enolpyruvyl to UDP-N-acetylglucosamine. In Caldanaerobacter subterraneus subsp. tengcongensis (strain DSM 15242 / JCM 11007 / NBRC 100824 / MB4) (Thermoanaerobacter tengcongensis), this protein is UDP-N-acetylglucosamine 1-carboxyvinyltransferase 3.